A 136-amino-acid polypeptide reads, in one-letter code: Urease subunit beta (136 aa).

The interval 113–136 is disordered; the sequence is NDEYAGVFGDNGAENVNKKGRKRS.

The protein belongs to the urease beta subunit family. Heterotrimer of UreA (gamma), UreB (beta) and UreC (alpha) subunits. Three heterotrimers associate to form the active enzyme.

The protein resides in the cytoplasm. It carries out the reaction urea + 2 H2O + H(+) = hydrogencarbonate + 2 NH4(+). It functions in the pathway nitrogen metabolism; urea degradation; CO(2) and NH(3) from urea (urease route): step 1/1. The sequence is that of Urease subunit beta from Staphylococcus aureus (strain Newman).